Consider the following 722-residue polypeptide: Polyribonucleotide nucleotidyltransferase (722 aa).

Mg(2+)-binding residues include Asp-495 and Asp-501. One can recognise a KH domain in the interval 561-620; the sequence is PRLYVMKINPEKIREVIGKGGETIRSITKDTGCEINIEEDGTITIASVSSEGAEAAKKRI. The S1 motif domain maps to 630–700; it reads GKVYEGTVVK…DRGRIRLSIK (71 aa).

This sequence belongs to the polyribonucleotide nucleotidyltransferase family. The cofactor is Mg(2+).

It is found in the cytoplasm. It carries out the reaction RNA(n+1) + phosphate = RNA(n) + a ribonucleoside 5'-diphosphate. Its function is as follows. Involved in mRNA degradation. Catalyzes the phosphorolysis of single-stranded polyribonucleotides processively in the 3'- to 5'-direction. In Chromobacterium violaceum (strain ATCC 12472 / DSM 30191 / JCM 1249 / CCUG 213 / NBRC 12614 / NCIMB 9131 / NCTC 9757 / MK), this protein is Polyribonucleotide nucleotidyltransferase.